The sequence spans 468 residues: Glutamate--tRNA ligase (468 aa).

A 'HIGH' region motif is present at residues 8-18 (PSPTGFLHVGG). Residues Cys-97, Cys-99, Cys-124, and Asp-126 each coordinate Zn(2+). The short motif at 236 to 240 (KLSKR) is the 'KMSKS' region element. Lys-239 is an ATP binding site.

Belongs to the class-I aminoacyl-tRNA synthetase family. Glutamate--tRNA ligase type 1 subfamily. As to quaternary structure, monomer. It depends on Zn(2+) as a cofactor.

Its subcellular location is the cytoplasm. It catalyses the reaction tRNA(Glu) + L-glutamate + ATP = L-glutamyl-tRNA(Glu) + AMP + diphosphate. Its function is as follows. Catalyzes the attachment of glutamate to tRNA(Glu) in a two-step reaction: glutamate is first activated by ATP to form Glu-AMP and then transferred to the acceptor end of tRNA(Glu). The sequence is that of Glutamate--tRNA ligase from Francisella tularensis subsp. tularensis (strain SCHU S4 / Schu 4).